The primary structure comprises 1022 residues: MNGEWKSALRLQIEALAKRNELHRKSSVDEIKKRTVDMDKRIVKLRELVGSSANDAALFYLECVCHADETERLLNRGSSVGKEKKWKKVKRKTSSSVAPPLSRTISSLPGVSSPDVIQTIDVSALEDQTPQRPHWWDQFQLYRRTDLLRFSKQNDRRELWRTQKDFFLSCLGFMVGVGHTMRFPAKVYQHGGGVFFIPYLFSLIFFGLPLVFLHLSLGQYTGQAANTAFQRLMPIGSGVGWALVVIAIPVAVYYNIIVAWAIHYFFQSAKGLLLGDELPWETCRDEWQLDNRCCNLHNLHSCFNSTNSITAPEAFFHSEVLSLSTFGDFALGPLQSHLVLSLAAAWLLVFFGVFKGLGSIAQTMNVTATVPYLLLSILLLRGISLPGANKGLTFLFTVDSTKLWKWQIWKSAAEQVFYELGIDAGPLISMAAFSRYRNNIYRDSVLLVIMDALTSCLSGMVIFSFVGFIASESNSNVNDVLKHDPLYLSFTVYPGVTSFMYWGGLWATLFFGMLVLAAIDAEFAWLEMIASAFMNHFSMKNKAVENRLLAFLCLAGFFLGLPLCAQGGIFVFHAIENLNANWNSFSLALLSVAIVCYVYGIDNYLTDISAMLRVPRIQISKATRLKEKLIYFFGPGGIYIKFSLCFICPVILTVLLVASVLGYQRISFAGRPIPIDYEIVAWIVMIGPLLVVPLVAFMQIRQIRNEGKLLKSLFDTSEWRESQDDSLEPKDLYMRQSGKFESPPNRRRTPTIFTHRENTYMYIDSRGPTVRSRVFPLGASLDPYGWKAGRLRDRQQQIEETASNYSEEDSATTNSFMASTVKHNDDMELTLFGSPPAILGDDEKIMTTRFSESMPVNYKCRNVEVPRIPNKLPQNMERMARKTRKKRSSPSASDPPVPTSPLPPPPKLQHCRSEPPMMNSKESHSPEIITPGDDSPSISNSSDDSSDDCFRRATVIRRKTSDDDAFTHFSTATAESISITPLDFPRQRSLSSVAIYDQEQKNGRSKVLSQLKRPKPIDMPPK.

The Cytoplasmic segment spans residues 1–165 (MNGEWKSALR…RRELWRTQKD (165 aa)). A helical transmembrane segment spans residues 166-185 (FFLSCLGFMVGVGHTMRFPA). Topologically, residues 186–192 (KVYQHGG) are extracellular. The chain crosses the membrane as a helical span at residues 193-213 (GVFFIPYLFSLIFFGLPLVFL). Topologically, residues 214–241 (HLSLGQYTGQAANTAFQRLMPIGSGVGW) are cytoplasmic. A helical membrane pass occupies residues 242 to 262 (ALVVIAIPVAVYYNIIVAWAI). Over 263 to 337 (HYFFQSAKGL…DFALGPLQSH (75 aa)) the chain is Extracellular. The chain crosses the membrane as a helical span at residues 338 to 358 (LVLSLAAAWLLVFFGVFKGLG). S359 is a topological domain (cytoplasmic). Residues 360–380 (IAQTMNVTATVPYLLLSILLL) form a helical membrane-spanning segment. Residues 381–412 (RGISLPGANKGLTFLFTVDSTKLWKWQIWKSA) lie on the Extracellular side of the membrane. Residues 413 to 433 (AEQVFYELGIDAGPLISMAAF) form a helical membrane-spanning segment. At 434–444 (SRYRNNIYRDS) the chain is on the cytoplasmic side. The helical transmembrane segment at 445–465 (VLLVIMDALTSCLSGMVIFSF) threads the bilayer. At 466-498 (VGFIASESNSNVNDVLKHDPLYLSFTVYPGVTS) the chain is on the extracellular side. A helical transmembrane segment spans residues 499–519 (FMYWGGLWATLFFGMLVLAAI). Topologically, residues 520–550 (DAEFAWLEMIASAFMNHFSMKNKAVENRLLA) are cytoplasmic. A helical membrane pass occupies residues 551 to 571 (FLCLAGFFLGLPLCAQGGIFV). Topologically, residues 572–584 (FHAIENLNANWNS) are extracellular. A helical transmembrane segment spans residues 585–605 (FSLALLSVAIVCYVYGIDNYL). Residues 606–641 (TDISAMLRVPRIQISKATRLKEKLIYFFGPGGIYIK) are Cytoplasmic-facing. The helical transmembrane segment at 642-662 (FSLCFICPVILTVLLVASVLG) threads the bilayer. Over 663-677 (YQRISFAGRPIPIDY) the chain is Extracellular. A helical transmembrane segment spans residues 678-698 (EIVAWIVMIGPLLVVPLVAFM). The Cytoplasmic portion of the chain corresponds to 699–1022 (QIRQIRNEGK…RPKPIDMPPK (324 aa)). 2 disordered regions span residues 867–948 (RIPN…SSDD) and 995–1022 (IYDQ…MPPK). Residues 893–907 (SDPPVPTSPLPPPPK) show a composition bias toward pro residues. A compositionally biased stretch (low complexity) spans 933–943 (DDSPSISNSSD).

Belongs to the sodium:neurotransmitter symporter (SNF) (TC 2.A.22) family. As to quaternary structure, may interact with STAT family transcription factor sta-2; the interaction is probably direct.

It localises to the membrane. It is found in the cytoplasm. The protein localises to the vesicle. In terms of biological role, probably mediates sodium-dependent uptake of unknown small molecule(s). By positively modulating expression, in the epidermis, of antimicrobial peptides such as nlp-29, plays a role in resistance to fungal infection and in the response to physical wounding and phorbol ester PMA treatment. Role in response to wounding of the epidermis may be facilitated by recruitment of snf-12 to the wound site by microtubule-dependent vesicle trafficking. Functions cell autonomously in the epidermis, in concert with STAT transcription factor sta-2, probably acting at vesicular membranes, downstream of a p38 MAPK/pmk-1 pathway. The polypeptide is Sodium-dependent transporter snf-12 (Caenorhabditis elegans).